Reading from the N-terminus, the 282-residue chain is Pantothenate synthetase (282 aa).

An ATP-binding site is contributed by Met-30–His-37. His-37 acts as the Proton donor in catalysis. Gln-61 serves as a coordination point for (R)-pantoate. Gln-61 is a binding site for beta-alanine. Gly-147 to Asp-150 is an ATP binding site. Gln-153 contacts (R)-pantoate. Residues Val-176 and Lys-184 to Arg-187 contribute to the ATP site.

The protein belongs to the pantothenate synthetase family. Homodimer.

It localises to the cytoplasm. The enzyme catalyses (R)-pantoate + beta-alanine + ATP = (R)-pantothenate + AMP + diphosphate + H(+). Its pathway is cofactor biosynthesis; (R)-pantothenate biosynthesis; (R)-pantothenate from (R)-pantoate and beta-alanine: step 1/1. Catalyzes the condensation of pantoate with beta-alanine in an ATP-dependent reaction via a pantoyl-adenylate intermediate. This Bacillus thuringiensis subsp. konkukian (strain 97-27) protein is Pantothenate synthetase.